Here is a 136-residue protein sequence, read N- to C-terminus: Peptide methionine sulfoxide reductase B5 (136 aa).

A MsrB domain is found at 14-135 (DEEWRAVLSP…NSVSIKFTPA (122 aa)). Zn(2+)-binding residues include cysteine 53, cysteine 56, cysteine 99, and cysteine 102. The cysteines at positions 71 and 124 are disulfide-linked. The Nucleophile role is filled by cysteine 124.

This sequence belongs to the MsrB Met sulfoxide reductase family. Zn(2+) serves as cofactor.

It is found in the cytoplasm. It localises to the cytosol. It carries out the reaction L-methionyl-[protein] + [thioredoxin]-disulfide + H2O = L-methionyl-(R)-S-oxide-[protein] + [thioredoxin]-dithiol. In terms of biological role, catalyzes the reduction of methionine sulfoxide (MetSO) to methionine in proteins. Plays a protective role against oxidative stress by restoring activity to proteins that have been inactivated by methionine oxidation. MSRB family specifically reduces the MetSO R-enantiomer. The protein is Peptide methionine sulfoxide reductase B5 (MSRB5) of Oryza sativa subsp. japonica (Rice).